Consider the following 305-residue polypeptide: UDP-3-O-acyl-N-acetylglucosamine deacetylase (305 aa).

Residues H79, H238, and D242 each coordinate Zn(2+). H265 (proton donor) is an active-site residue.

It belongs to the LpxC family. Requires Zn(2+) as cofactor.

The catalysed reaction is a UDP-3-O-[(3R)-3-hydroxyacyl]-N-acetyl-alpha-D-glucosamine + H2O = a UDP-3-O-[(3R)-3-hydroxyacyl]-alpha-D-glucosamine + acetate. It functions in the pathway glycolipid biosynthesis; lipid IV(A) biosynthesis; lipid IV(A) from (3R)-3-hydroxytetradecanoyl-[acyl-carrier-protein] and UDP-N-acetyl-alpha-D-glucosamine: step 2/6. In terms of biological role, catalyzes the hydrolysis of UDP-3-O-myristoyl-N-acetylglucosamine to form UDP-3-O-myristoylglucosamine and acetate, the committed step in lipid A biosynthesis. The polypeptide is UDP-3-O-acyl-N-acetylglucosamine deacetylase (Proteus mirabilis (strain HI4320)).